We begin with the raw amino-acid sequence, 120 residues long: Large ribosomal subunit protein bL12 (120 aa).

It belongs to the bacterial ribosomal protein bL12 family. Homodimer. Part of the ribosomal stalk of the 50S ribosomal subunit. Forms a multimeric L10(L12)X complex, where L10 forms an elongated spine to which 2 to 4 L12 dimers bind in a sequential fashion. Binds GTP-bound translation factors.

In terms of biological role, forms part of the ribosomal stalk which helps the ribosome interact with GTP-bound translation factors. Is thus essential for accurate translation. The protein is Large ribosomal subunit protein bL12 of Shouchella clausii (strain KSM-K16) (Alkalihalobacillus clausii).